The primary structure comprises 92 residues: UPF0223 protein SERP0684 (92 aa).

The protein belongs to the UPF0223 family.

The polypeptide is UPF0223 protein SERP0684 (Staphylococcus epidermidis (strain ATCC 35984 / DSM 28319 / BCRC 17069 / CCUG 31568 / BM 3577 / RP62A)).